A 380-amino-acid polypeptide reads, in one-letter code: DNA replication and repair protein RecF (380 aa).

30–37 provides a ligand contact to ATP; the sequence is GENAQGKT.

Belongs to the RecF family.

It localises to the cytoplasm. Its function is as follows. The RecF protein is involved in DNA metabolism; it is required for DNA replication and normal SOS inducibility. RecF binds preferentially to single-stranded, linear DNA. It also seems to bind ATP. This chain is DNA replication and repair protein RecF, found in Synechococcus sp. (strain JA-2-3B'a(2-13)) (Cyanobacteria bacterium Yellowstone B-Prime).